A 189-amino-acid chain; its full sequence is Putative manganese efflux pump MntP (189 aa).

6 helical membrane-spanning segments follow: residues 8-28, 39-59, 65-85, 106-126, 131-151, and 166-186; these read FLSL…GFSI, IALF…SAGL, ISSF…GKMI, LTTL…GLSV, ILLA…IGVF, and IVGG…HLGF.

This sequence belongs to the MntP (TC 9.B.29) family.

Its subcellular location is the cell inner membrane. Probably functions as a manganese efflux pump. The chain is Putative manganese efflux pump MntP from Gloeothece citriformis (strain PCC 7424) (Cyanothece sp. (strain PCC 7424)).